The chain runs to 411 residues: Peptidase T (411 aa).

His-78 is a Zn(2+) binding site. Residue Asp-80 is part of the active site. Position 140 (Asp-140) interacts with Zn(2+). The active-site Proton acceptor is Glu-173. Positions 174, 196, and 379 each coordinate Zn(2+).

This sequence belongs to the peptidase M20B family. Requires Zn(2+) as cofactor.

Its subcellular location is the cytoplasm. The enzyme catalyses Release of the N-terminal residue from a tripeptide.. Its function is as follows. Cleaves the N-terminal amino acid of tripeptides. The protein is Peptidase T of Yersinia pseudotuberculosis serotype O:3 (strain YPIII).